A 459-amino-acid chain; its full sequence is Disease resistance protein CHL1 (459 aa).

The region spanning 16 to 170 (REVDVFLSFC…QIARDISLVV (155 aa)) is the TIR domain. Residue glutamate 89 is part of the active site. In terms of domain architecture, NB-ARC spans 191 to 401 (VYDLLALEVN…LLKLKAKQGG (211 aa)). Over residues 429–440 (ERKESSQDKSQQ) the composition is skewed to basic and acidic residues. Residues 429 to 459 (ERKESSQDKSQQESEVAADILIGKESSQDKQ) are disordered.

In terms of tissue distribution, mostly expressed in leaves, stems and roots, and, to a lower extent, in flowers and siliques.

It localises to the cytoplasm. It catalyses the reaction NAD(+) + H2O = ADP-D-ribose + nicotinamide + H(+). Confers resistance to low temperatures by limiting chloroplast damage and cell death, thus maintaining growth homeostasis. In Arabidopsis thaliana (Mouse-ear cress), this protein is Disease resistance protein CHL1.